A 276-amino-acid polypeptide reads, in one-letter code: MRAARTKSMRIITLLAAIVACAHFIPFYILLTTSLKAKGDYSSKWIFPADISFHNFSEAWERASLGNSFINTMIITGFSALLLIIFGSLAAYPLARRETKLNKAVFALLISIMIIPPLTSMVPLYRMVVDAGMVNTHAIAIFINTAAYMPLTVFLYSGFIRSTIPKELVEAARIDGAGMLKIFFTIVFPLLKPITATICIISCVFIWNDYQFAIFFLQDQKVQTLTVAMAGFFGENANNLHLVAAAALMAMLPMVVLFLALQKYFIAGLSSGAVKG.

A run of 6 helical transmembrane segments spans residues isoleucine 11–leucine 31, isoleucine 74–leucine 94, alanine 104–leucine 124, isoleucine 139–phenylalanine 159, isoleucine 186–isoleucine 206, and leucine 240–alanine 260. The ABC transmembrane type-1 domain maps to phenylalanine 69–leucine 261.

Belongs to the binding-protein-dependent transport system permease family. In terms of assembly, the complex is composed of two ATP-binding proteins (MsmX), two transmembrane proteins (MelC and MelD) and a solute-binding protein (MelE).

The protein resides in the cell membrane. Part of the ABC transporter complex MelEDC-MsmX involved in melibiose, raffinose and stachyose import. Probably responsible for the translocation of the substrate across the membrane. This Bacillus subtilis (strain 168) protein is Melibiose/raffinose/stachyose import permease protein MelC.